Consider the following 101-residue polypeptide: MSDPCECFFDHESAMQRLLAMLRNSQADCTDTGCDNDGLSREGGNTMMMWTLLWTFMAMALYVMRPNSMRSDRRTADDAAIEKPTGSSDDNTPPPPPPSAM.

Positions 71–81 (SDRRTADDAAI) are enriched in basic and acidic residues. The segment at 71–101 (SDRRTADDAAIEKPTGSSDDNTPPPPPPSAM) is disordered. Residues 92–101 (TPPPPPPSAM) show a composition bias toward pro residues.

This chain is Small integral membrane protein 14, found in Caenorhabditis elegans.